The chain runs to 85 residues: Large ribosomal subunit protein bL27 (85 aa).

The interval 1 to 20 is disordered; sequence MATKKAGGSTRNGRDSEAKR.

This sequence belongs to the bacterial ribosomal protein bL27 family.

In Haemophilus influenzae (strain PittEE), this protein is Large ribosomal subunit protein bL27.